A 626-amino-acid chain; its full sequence is FAD-binding monooxygenase moxY (626 aa).

Residues 1 to 23 (MAPFLSAHGESASSSSSSSPTPS) show a composition bias toward low complexity. The segment at 1 to 47 (MAPFLSAHGESASSSSSSSPTPSRHTRNQHVDYSTPGSTGYNIPQNT) is disordered. Polar residues predominate over residues 31–47 (VDYSTPGSTGYNIPQNT). FAD contacts are provided by residues 96 to 99 (TWLE), 108 to 109 (DI), and Tyr-114. 106–108 (GCD) serves as a coordination point for NADP(+). NADP(+) is bound by residues 243 to 249 (SGASSIQ) and 266 to 267 (RT).

This sequence belongs to the FAD-binding monooxygenase family. FAD is required as a cofactor.

The protein operates within mycotoxin biosynthesis. In terms of biological role, FAD-binding monooxygenase; part of the fragmented gene cluster that mediates the biosynthesis of dothistromin (DOTH), a polyketide toxin very similar in structure to the aflatoxin precursor, versicolorin B. The first step of the pathway is the conversion of acetate to norsolorinic acid (NOR) and requires the fatty acid synthase subunits hexA and hexB, as well as the polyketide synthase pksA. PksA combines a hexanoyl starter unit and 7 malonyl-CoA extender units to synthesize the precursor NOR. The hexanoyl starter unit is provided to the acyl-carrier protein (ACP) domain by the fungal fatty acid synthase hexA/hexB. The second step is the conversion of NOR to averantin (AVN) and requires the norsolorinic acid ketoreductase nor1, which catalyzes the dehydration of norsolorinic acid to form (1'S)-averantin. The cytochrome P450 monooxygenase avnA then catalyzes the hydroxylation of AVN to 5'hydroxyaverantin (HAVN). The next step is performed by adhA that transforms HAVN to averufin (AVF). Averufin might then be converted to hydroxyversicolorone by cypX and avfA. Hydroxyversicolorone is further converted versiconal hemiacetal acetate (VHA) by moxY. VHA is then the substrate for the versiconal hemiacetal acetate esterase est1 to yield versiconal (VAL). Versicolorin B synthase vbsA then converts VAL to versicolorin B (VERB) by closing the bisfuran ring. Then, the activity of the versicolorin B desaturase verB leads to versicolorin A (VERA). DotB, a predicted chloroperoxidase, may perform epoxidation of the A-ring of VERA. Alternatively, a cytochrome P450, such as cypX or avnA could catalyze this step. It is also possible that another, uncharacterized, cytochrome P450 enzyme is responsible for this step. Opening of the epoxide could potentially be achieved by the epoxide hydrolase epoA. However, epoA seems not to be required for DOTH biosynthesis, but other epoxide hydrolases may have the ability to complement this hydrolysis. Alternatively, opening of the epoxide ring could be achieved non-enzymatically. The next step is the deoxygenation of ring A to yield the 5,8-dihydroxyanthraquinone which is most likely catalyzed by the NADPH dehydrogenase encoded by ver1. The last stages of DOTH biosynthesis are proposed to involve hydroxylation of the bisfuran. OrdB and norB might have oxidative roles here. An alternative possibility is that cytochrome P450 monoogenases such as avnA and cypX might perform these steps in addition to previously proposed steps. In Dothistroma septosporum (Red band needle blight fungus), this protein is FAD-binding monooxygenase moxY.